Here is a 150-residue protein sequence, read N- to C-terminus: Nucleoside diphosphate kinase (150 aa).

ATP contacts are provided by lysine 10, phenylalanine 58, arginine 86, threonine 92, arginine 103, and asparagine 113. Histidine 116 functions as the Pros-phosphohistidine intermediate in the catalytic mechanism.

The protein belongs to the NDK family. In terms of assembly, homohexamer. The cofactor is Mg(2+).

It catalyses the reaction a 2'-deoxyribonucleoside 5'-diphosphate + ATP = a 2'-deoxyribonucleoside 5'-triphosphate + ADP. The catalysed reaction is a ribonucleoside 5'-diphosphate + ATP = a ribonucleoside 5'-triphosphate + ADP. Functionally, major role in the synthesis of nucleoside triphosphates other than ATP. The ATP gamma phosphate is transferred to the NDP beta phosphate via a ping-pong mechanism, using a phosphorylated active-site intermediate. The chain is Nucleoside diphosphate kinase (awd) from Drosophila yakuba (Fruit fly).